The sequence spans 106 residues: uncharacterized protein (106 aa).

Residues 1-6 lie on the Cytoplasmic side of the membrane; sequence MYQTSP. The chain crosses the membrane as a helical span at residues 7-27; that stretch reads LSLFYFQVLVPKFLECFLCFP. Topologically, residues 28-32 are extracellular; the sequence is YHKIS. Residues 33-53 traverse the membrane as a helical segment; the sequence is LVALLSFFYCQLQTNMIILLS. At 54-73 the chain is on the cytoplasmic side; it reads QIKRFLYRQIMIALKIKAKK. The chain crosses the membrane as a helical span at residues 74–94; that stretch reads FWFIFKYFNVSCDARLFNELF. The Extracellular portion of the chain corresponds to 95 to 106; the sequence is YIFQTYVSVDSK.

The protein resides in the membrane. This is an uncharacterized protein from Saccharomyces cerevisiae (strain ATCC 204508 / S288c) (Baker's yeast).